We begin with the raw amino-acid sequence, 299 residues long: MHFPIVALIGRYQDTGLDAPLRALAAMLTQAGRRVLVDADTARNTAVHEYPVATMQEIGESASLAVVMGGDGTVLGVARHLAPYGVPLIGINHGRLGFITDIPLQDAHDALARVLDGNFQIEERMLLQGSVWRGDALMYTASALNDVVLNRAGRGGMIEMRVELDGVYMYTQRADGLIIATPTGSTAYALSANGPLLHPGLNAMVLVPVAPQSLSNRPIVIPDTGVLNMTLTAIGRVETGASAHFDMQTWSDLQLGDRITVQRAPHTARLVHPQGYSFFSTLRRKLHWNQMPQVSDNIE.

Catalysis depends on Asp71, which acts as the Proton acceptor. Residues 71 to 72 (DG), 145 to 146 (ND), Arg173, Asp175, 186 to 191 (TAYALS), Ala210, and Gln248 each bind NAD(+).

It belongs to the NAD kinase family. A divalent metal cation serves as cofactor.

Its subcellular location is the cytoplasm. The catalysed reaction is NAD(+) + ATP = ADP + NADP(+) + H(+). Functionally, involved in the regulation of the intracellular balance of NAD and NADP, and is a key enzyme in the biosynthesis of NADP. Catalyzes specifically the phosphorylation on 2'-hydroxyl of the adenosine moiety of NAD to yield NADP. In Bordetella avium (strain 197N), this protein is NAD kinase.